The primary structure comprises 107 residues: MKSPIIYVCAALAEIAGCFAFWGWLRLGKPVWWLLPGMLSLAAFAYLLTLVESQAAGRAYASYGGIYIVASLVWLWSVENVRPDRWDVTGGCVCLIGAAIILWGPRG.

The next 4 helical transmembrane spans lie at 5–25 (IIYV…WGWL), 31–51 (VWWL…LTLV), 59–79 (AYAS…WSVE), and 85–105 (RWDV…LWGP).

Belongs to the UPF0060 family.

It localises to the cell inner membrane. The sequence is that of UPF0060 membrane protein RPD_3084 from Rhodopseudomonas palustris (strain BisB5).